The following is a 265-amino-acid chain: Catechol O-methyltransferase (265 aa).

The Cytoplasmic portion of the chain corresponds to 1–2 (ML). Residues 3–19 (LAAVSLGLLLLAFLLLL) form a helical; Signal-anchor for type II membrane protein membrane-spanning segment. Residues 20–265 (RHLGWGLVAI…QGPGSSPVKS (246 aa)) lie on the Extracellular side of the membrane. Residues V85, E107, S115, E133, I134, 160–163 (GASQ), S162, and D184 contribute to the S-adenosyl-L-methionine site. D184 contacts Mg(2+). Residue K187 participates in substrate binding. D212 and N213 together coordinate Mg(2+). N213 and E242 together coordinate substrate. Phosphoserine occurs at positions 260, 261, and 265.

It belongs to the class I-like SAM-binding methyltransferase superfamily. Cation-dependent O-methyltransferase family. Mg(2+) is required as a cofactor.

The protein resides in the cytoplasm. It is found in the cell membrane. The catalysed reaction is a catechol + S-adenosyl-L-methionine = a guaiacol + S-adenosyl-L-homocysteine + H(+). The enzyme catalyses 2-hydroxyestrone + S-adenosyl-L-methionine = 2-hydroxy-3-methoxy-estrone + S-adenosyl-L-homocysteine + H(+). It carries out the reaction 4-hydroxyestrone + S-adenosyl-L-methionine = 4-methoxyestrone + S-adenosyl-L-homocysteine + H(+). It catalyses the reaction 2-hydroxyestrone + S-adenosyl-L-methionine = 2-methoxyestrone + S-adenosyl-L-homocysteine + H(+). The catalysed reaction is 4-hydroxy-17beta-estradiol + S-adenosyl-L-methionine = 4-methoxy-17beta-estradiol + S-adenosyl-L-homocysteine + H(+). The enzyme catalyses 2-hydroxy-17beta-estradiol + S-adenosyl-L-methionine = 2-hydroxy-3-methoxy-17beta-estradiol + S-adenosyl-L-homocysteine + H(+). It carries out the reaction 2-hydroxy-17beta-estradiol + S-adenosyl-L-methionine = 2-methoxy-17beta-estradiol + S-adenosyl-L-homocysteine + H(+). In terms of biological role, catalyzes the O-methylation, and thereby the inactivation, of catecholamine neurotransmitters and catechol hormones. Also shortens the biological half-lives of certain neuroactive drugs, like L-DOPA, alpha-methyl DOPA and isoproterenol. In Mus musculus (Mouse), this protein is Catechol O-methyltransferase.